We begin with the raw amino-acid sequence, 580 residues long: DNA mismatch repair protein MutL (580 aa).

The protein belongs to the DNA mismatch repair MutL/HexB family.

This protein is involved in the repair of mismatches in DNA. It is required for dam-dependent methyl-directed DNA mismatch repair. May act as a 'molecular matchmaker', a protein that promotes the formation of a stable complex between two or more DNA-binding proteins in an ATP-dependent manner without itself being part of a final effector complex. In Chlamydia caviae (strain ATCC VR-813 / DSM 19441 / 03DC25 / GPIC) (Chlamydophila caviae), this protein is DNA mismatch repair protein MutL.